We begin with the raw amino-acid sequence, 34 residues long: Potassium channel toxin alpha-KTx 6.3 (34 aa).

Disulfide bonds link Cys-3–Cys-24, Cys-9–Cys-29, Cys-13–Cys-31, and Cys-19–Cys-34. Cys-34 is subject to Cysteine amide.

It belongs to the short scorpion toxin superfamily. Potassium channel inhibitor family. Alpha-KTx 06 subfamily. In terms of processing, amidated. The amidated toxin shows 5-fold more affinity for Kv1.3/KCNA3 than the synthetic carboxylated form. As to expression, expressed by the venom gland.

The protein resides in the secreted. In terms of biological role, potently blocks voltage-gated potassium channels Kv1.1/KCNA1 (IC(50)=7-11 nM) and Kv1.3/KCNA3 (IC(50)=11-29 pM). Also mildly blocks intermediate (IK) conductance calcium-activated potassium channels (KCa3.1/KCNN4) and ERG1/Kv11.1/KCNH2. Shows ability to suppress proliferation of lymphocytes, which are known to be sensitive to Kv1.3/KCNA3 homotetrameric channel block. In Heterometrus spinifer (Asia giant forest scorpion), this protein is Potassium channel toxin alpha-KTx 6.3.